Reading from the N-terminus, the 119-residue chain is Large ribosomal subunit protein eL31z (119 aa).

It belongs to the eukaryotic ribosomal protein eL31 family.

This Arabidopsis thaliana (Mouse-ear cress) protein is Large ribosomal subunit protein eL31z (RPL31A).